Consider the following 217-residue polypeptide: Thymidylate kinase (217 aa).

Residue 7–14 (GIDGAGKS) participates in ATP binding.

The protein belongs to the thymidylate kinase family.

It carries out the reaction dTMP + ATP = dTDP + ADP. Its function is as follows. Phosphorylation of dTMP to form dTDP in both de novo and salvage pathways of dTTP synthesis. In Pelodictyon phaeoclathratiforme (strain DSM 5477 / BU-1), this protein is Thymidylate kinase.